Consider the following 176-residue polypeptide: Nudix hydrolase 18, mitochondrial (176 aa).

A mitochondrion-targeting transit peptide spans 1–21; sequence MVCLVSRTGRQSQRYNKGRRQ. Residues 22–153 form the Nudix hydrolase domain; it reads VVGCIPYRLK…WMKEALDVLV (132 aa). Residues 60-81 carry the Nudix box motif; the sequence is GGWELDESVEEAASRESLEEAG. The Mg(2+) site is built by E75 and E79.

Belongs to the Nudix hydrolase family. Requires Mg(2+) as cofactor. Mn(2+) serves as cofactor. Expressed in roots, stems and inflorescences.

Its subcellular location is the mitochondrion. In terms of biological role, probably mediates the hydrolysis of some nucleoside diphosphate derivatives. The polypeptide is Nudix hydrolase 18, mitochondrial (NUDT18) (Arabidopsis thaliana (Mouse-ear cress)).